The primary structure comprises 501 residues: Ribose import ATP-binding protein RbsA (501 aa).

ABC transporter domains follow at residues 5-241 (LQLK…VGRK) and 252-495 (APGD…VGKL). 37-44 (GENGAGKS) lines the ATP pocket.

The protein belongs to the ABC transporter superfamily. Ribose importer (TC 3.A.1.2.1) family. The complex is composed of an ATP-binding protein (RbsA), two transmembrane proteins (RbsC) and a solute-binding protein (RbsB).

Its subcellular location is the cell inner membrane. It catalyses the reaction D-ribose(out) + ATP + H2O = D-ribose(in) + ADP + phosphate + H(+). Functionally, part of the ABC transporter complex RbsABC involved in ribose import. Responsible for energy coupling to the transport system. The sequence is that of Ribose import ATP-binding protein RbsA from Escherichia coli O6:H1 (strain CFT073 / ATCC 700928 / UPEC).